We begin with the raw amino-acid sequence, 413 residues long: UPF0754 membrane protein PCC7424_0748 (413 aa).

2 helical membrane passes run 3 to 23 (IALE…GAII) and 391 to 411 (IVNL…VILL).

The protein belongs to the UPF0754 family.

It is found in the cell inner membrane. The protein is UPF0754 membrane protein PCC7424_0748 of Gloeothece citriformis (strain PCC 7424) (Cyanothece sp. (strain PCC 7424)).